Here is a 187-residue protein sequence, read N- to C-terminus: Peptidyl-tRNA hydrolase (187 aa).

Tyr-14 lines the tRNA pocket. His-19 functions as the Proton acceptor in the catalytic mechanism. Residues Tyr-60, Asn-62, and Asn-108 each coordinate tRNA.

The protein belongs to the PTH family. In terms of assembly, monomer.

Its subcellular location is the cytoplasm. It carries out the reaction an N-acyl-L-alpha-aminoacyl-tRNA + H2O = an N-acyl-L-amino acid + a tRNA + H(+). Its function is as follows. Hydrolyzes ribosome-free peptidyl-tRNAs (with 1 or more amino acids incorporated), which drop off the ribosome during protein synthesis, or as a result of ribosome stalling. In terms of biological role, catalyzes the release of premature peptidyl moieties from peptidyl-tRNA molecules trapped in stalled 50S ribosomal subunits, and thus maintains levels of free tRNAs and 50S ribosomes. This Mycoplasmopsis synoviae (strain 53) (Mycoplasma synoviae) protein is Peptidyl-tRNA hydrolase.